The sequence spans 227 residues: ATP synthase F(0) complex subunit a (227 aa).

6 helical membrane-spanning segments follow: residues 14 to 34, 69 to 89, 98 to 118, 132 to 152, 179 to 199, and 202 to 222; these read YLGIPLIAIAIALPWVLFPLP, WALLLASLMVFLITINMLGLL, QLSLNMGLAIPLWLATVIIGL, EGTPLPLIPVLIIIETISLFI, VFVLLPMMPTVAILTATVLFL, and LLEVAVAMIQAYVFVLLLSLY.

This sequence belongs to the ATPase A chain family. In terms of assembly, component of the ATP synthase complex composed at least of ATP5F1A/subunit alpha, ATP5F1B/subunit beta, ATP5MC1/subunit c (homooctomer), MT-ATP6/subunit a, MT-ATP8/subunit 8, ATP5ME/subunit e, ATP5MF/subunit f, ATP5MG/subunit g, ATP5MK/subunit k, ATP5MJ/subunit j, ATP5F1C/subunit gamma, ATP5F1D/subunit delta, ATP5F1E/subunit epsilon, ATP5PF/subunit F6, ATP5PB/subunit b, ATP5PD/subunit d, ATP5PO/subunit OSCP. ATP synthase complex consists of a soluble F(1) head domain (subunits alpha(3) and beta(3)) - the catalytic core - and a membrane F(0) domain - the membrane proton channel (subunits c, a, 8, e, f, g, k and j). These two domains are linked by a central stalk (subunits gamma, delta, and epsilon) rotating inside the F1 region and a stationary peripheral stalk (subunits F6, b, d, and OSCP). Interacts with DNAJC30; interaction is direct.

It is found in the mitochondrion inner membrane. It catalyses the reaction H(+)(in) = H(+)(out). Functionally, subunit a, of the mitochondrial membrane ATP synthase complex (F(1)F(0) ATP synthase or Complex V) that produces ATP from ADP in the presence of a proton gradient across the membrane which is generated by electron transport complexes of the respiratory chain. ATP synthase complex consist of a soluble F(1) head domain - the catalytic core - and a membrane F(1) domain - the membrane proton channel. These two domains are linked by a central stalk rotating inside the F(1) region and a stationary peripheral stalk. During catalysis, ATP synthesis in the catalytic domain of F(1) is coupled via a rotary mechanism of the central stalk subunits to proton translocation. With the subunit c (ATP5MC1), forms the proton-conducting channel in the F(0) domain, that contains two crucial half-channels (inlet and outlet) that facilitate proton movement from the mitochondrial intermembrane space (IMS) into the matrix. Protons are taken up via the inlet half-channel and released through the outlet half-channel, following a Grotthuss mechanism. The protein is ATP synthase F(0) complex subunit a of Formosania lacustris (Oriental stream loach).